We begin with the raw amino-acid sequence, 100 residues long: Testis development-related protein 1 (100 aa).

Positions 73–100 are disordered; sequence GLGSLGGQDSSGSLVQRASCELESPYEL.

In terms of tissue distribution, expressed in the testis but not in any other non-reproductive tissues (at protein level). Mainly located in spermatogenic cells in seminiferous tubules of adult testis.

It is found in the cytoplasm. This is Testis development-related protein 1 (TDRG1) from Homo sapiens (Human).